A 122-amino-acid chain; its full sequence is Replication termination protein (122 aa).

In terms of assembly, homodimer.

Functionally, plays a role in DNA replication and termination (fork arrest mechanism). Two dimers of rtp bind to the two inverted repeat regions (IRI and IRII) present in the termination site. The binding of each dimer is centered on an 8 bp direct repeat. This chain is Replication termination protein (rtp), found in Bacillus spizizenii (strain ATCC 23059 / NRRL B-14472 / W23) (Bacillus subtilis subsp. spizizenii).